We begin with the raw amino-acid sequence, 370 residues long: 4-hydroxy-3-methylbut-2-en-1-yl diphosphate synthase (flavodoxin) (370 aa).

Residues C268, C271, C303, and E310 each coordinate [4Fe-4S] cluster.

It belongs to the IspG family. [4Fe-4S] cluster is required as a cofactor.

The enzyme catalyses (2E)-4-hydroxy-3-methylbut-2-enyl diphosphate + oxidized [flavodoxin] + H2O + 2 H(+) = 2-C-methyl-D-erythritol 2,4-cyclic diphosphate + reduced [flavodoxin]. It participates in isoprenoid biosynthesis; isopentenyl diphosphate biosynthesis via DXP pathway; isopentenyl diphosphate from 1-deoxy-D-xylulose 5-phosphate: step 5/6. Converts 2C-methyl-D-erythritol 2,4-cyclodiphosphate (ME-2,4cPP) into 1-hydroxy-2-methyl-2-(E)-butenyl 4-diphosphate. This chain is 4-hydroxy-3-methylbut-2-en-1-yl diphosphate synthase (flavodoxin), found in Bacillus cereus (strain G9842).